The primary structure comprises 338 residues: Fusarubin cluster-specific transcription factor fsr6 (338 aa).

Residues 16-44 (CDACTTAKVRCSRTHPCERCEDNGQAKEC) constitute a DNA-binding region (zn(2)-C6 fungal-type).

Its subcellular location is the nucleus. In terms of biological role, transcription factor that regulates the expression of the gene cluster that mediates the biosynthesis of fusarubins, highly pigmented naphthoquinones responsible for the coloration of the fruiting bodies. The polypeptide is Fusarubin cluster-specific transcription factor fsr6 (Gibberella fujikuroi (strain CBS 195.34 / IMI 58289 / NRRL A-6831) (Bakanae and foot rot disease fungus)).